An 859-amino-acid chain; its full sequence is Villin-like protein (859 aa).

6 Gelsolin-like repeats span residues 24–76 (LKML…EARE), 148–188 (VSAT…SEKA), 264–308 (LVVQ…QEKK), 401–450 (LQRQ…EDTK), 521–561 (TRTM…DQRE), and 624–665 (LVLT…WKKE). The HP domain maps to 793 to 859 (SMVNGSLPRE…QQAKKKLGFF (67 aa)).

Belongs to the villin/gelsolin family.

Its function is as follows. Possible tumor suppressor. This chain is Villin-like protein, found in Mus musculus (Mouse).